Consider the following 436-residue polypeptide: ATP-dependent protease ATPase subunit HslU (436 aa).

ATP is bound by residues Ile18, 60–65, Asp250, Glu314, and Arg386; that span reads GVGKTE.

Belongs to the ClpX chaperone family. HslU subfamily. In terms of assembly, a double ring-shaped homohexamer of HslV is capped on each side by a ring-shaped HslU homohexamer. The assembly of the HslU/HslV complex is dependent on binding of ATP.

It is found in the cytoplasm. Its function is as follows. ATPase subunit of a proteasome-like degradation complex; this subunit has chaperone activity. The binding of ATP and its subsequent hydrolysis by HslU are essential for unfolding of protein substrates subsequently hydrolyzed by HslV. HslU recognizes the N-terminal part of its protein substrates and unfolds these before they are guided to HslV for hydrolysis. In Mesorhizobium japonicum (strain LMG 29417 / CECT 9101 / MAFF 303099) (Mesorhizobium loti (strain MAFF 303099)), this protein is ATP-dependent protease ATPase subunit HslU.